A 175-amino-acid chain; its full sequence is MTNKEVLDNASLQRALTRITYEIIERNKGGQDLVLVGIKTRGEFLAHRIANRLEQLEGVKIPVMAIDITNFRDDVLNHDDSLGLNDEEKTNIADKNIVLIDDVLFTGRTIRAALDALIHIGRPNTIALAVLVDRGHRELPIRADFVGKNIPTAQNEKIKVLVQEIDGRDAVEIVH.

Residues 97 to 109 (IVLIDDVLFTGRT) carry the PRPP-binding motif.

The protein belongs to the purine/pyrimidine phosphoribosyltransferase family. PyrR subfamily. As to quaternary structure, homodimer and homohexamer; in equilibrium.

The catalysed reaction is UMP + diphosphate = 5-phospho-alpha-D-ribose 1-diphosphate + uracil. Functionally, regulates transcriptional attenuation of the pyrimidine nucleotide (pyr) operon by binding in a uridine-dependent manner to specific sites on pyr mRNA. This disrupts an antiterminator hairpin in the RNA and favors formation of a downstream transcription terminator, leading to a reduced expression of downstream genes. Its function is as follows. Also displays a weak uracil phosphoribosyltransferase activity which is not physiologically significant. In Leuconostoc citreum (strain KM20), this protein is Bifunctional protein PyrR.